A 268-amino-acid polypeptide reads, in one-letter code: Putative F-box protein At3g23420 (268 aa).

The region spanning 5–51 (PRDLSDLPRNMAEEVLSRVPMTSLRRLRFTCKKWNTLSRCRSFAKKH) is the F-box domain.

The sequence is that of Putative F-box protein At3g23420 from Arabidopsis thaliana (Mouse-ear cress).